Consider the following 374-residue polypeptide: Pectate lyase 3 (374 aa).

A signal peptide spans 1 to 22 (MKYLLPSAAAGLLLLAAQPTMA). Residues Cys-93 and Cys-176 are joined by a disulfide bond. Residues Asp-150, Asp-152, Glu-187, and Asp-191 each coordinate Ca(2+). The active site involves Arg-239. A disulfide bridge links Cys-350 with Cys-373.

It belongs to the polysaccharide lyase 1 family. PLADES subfamily. Ca(2+) serves as cofactor.

Its subcellular location is the secreted. It catalyses the reaction Eliminative cleavage of (1-&gt;4)-alpha-D-galacturonan to give oligosaccharides with 4-deoxy-alpha-D-galact-4-enuronosyl groups at their non-reducing ends.. It participates in glycan metabolism; pectin degradation; 2-dehydro-3-deoxy-D-gluconate from pectin: step 2/5. Involved in maceration and soft-rotting of plant tissue. The sequence is that of Pectate lyase 3 (pel3) from Pectobacterium carotovorum (Erwinia carotovora).